The chain runs to 1866 residues: Protein strawberry notch homolog (1866 aa).

Residues 19-28 (QQSSPTPSTS) are compositionally biased toward low complexity. Disordered stretches follow at residues 19 to 63 (QQSS…HSSS), 132 to 151 (TAPT…IVPK), 156 to 253 (LFET…GLPI), 561 to 581 (GMAS…QKAK), and 1112 to 1308 (GLSG…ARGS). Polar residues-rich tracts occupy residues 37-63 (QSFS…HSSS) and 134-146 (PTVN…TPTV). Residues 161 to 176 (TADSPTPSGDTSTTAS) show a composition bias toward low complexity. Polar residues-rich tracts occupy residues 191–203 (DRQN…TARS) and 210–228 (TPST…LTQR). Over residues 229-239 (SHTSSPASSAS) the composition is skewed to low complexity. Residues 566-577 (RLQTTPQPLTKS) are compositionally biased toward polar residues. Positions 1112 to 1126 (GLSGIGRSSMSSSTG) are enriched in low complexity. A compositionally biased stretch (acidic residues) spans 1142-1152 (DGSDDEVENDM). A compositionally biased stretch (basic and acidic residues) spans 1164–1177 (ESAREEAEGARTLE). Acidic residues predominate over residues 1194–1213 (SSSDDSDEEVVKDEDEDEEA). Basic and acidic residues-rich tracts occupy residues 1262 to 1281 (RDEE…EERR) and 1290 to 1304 (RRAE…EELQ).

Belongs to the SBNO family. In terms of tissue distribution, expressed in the somatic gonad, neurons, hypodermal cells, seam cells, the excretory system, and intestinal cells (at protein level).

Its subcellular location is the nucleus. Its function is as follows. Transcriptional activator that functions upstream of the let-60/Ras and let-23/EGFR signaling pathways to positively regulate lin-3 expression and thereby promote vulval induction. Plays a role in excretory duct development. Plays a role in male tail development. The protein is Protein strawberry notch homolog of Caenorhabditis elegans.